We begin with the raw amino-acid sequence, 184 residues long: Photosystem I assembly protein Ycf4 (184 aa).

Helical transmembrane passes span 22-42 (FCWA…GISS) and 57-77 (IVFF…LFIS).

The protein belongs to the Ycf4 family.

The protein localises to the plastid. Its subcellular location is the chloroplast thylakoid membrane. In terms of biological role, seems to be required for the assembly of the photosystem I complex. The chain is Photosystem I assembly protein Ycf4 from Coffea arabica (Arabian coffee).